A 572-amino-acid chain; its full sequence is Periplasmic pectate lyase (572 aa).

A signal peptide spans 1–23; that stretch reads MKKRALLLSMSVLAMLYIPAGQA.

This sequence belongs to the polysaccharide lyase 2 family.

It localises to the periplasm. The enzyme catalyses Eliminative cleavage of (1-&gt;4)-alpha-D-galacturonan to give oligosaccharides with 4-deoxy-alpha-D-galact-4-enuronosyl groups at their non-reducing ends.. Its pathway is glycan metabolism; pectin degradation; 2-dehydro-3-deoxy-D-gluconate from pectin: step 2/5. This is Periplasmic pectate lyase (pelY) from Yersinia pseudotuberculosis serotype I (strain IP32953).